A 196-amino-acid chain; its full sequence is Orotate phosphoribosyltransferase (196 aa).

5-phospho-alpha-D-ribose 1-diphosphate is bound at residue glutamate 117–serine 125. 2 residues coordinate orotate: threonine 121 and arginine 149.

Belongs to the purine/pyrimidine phosphoribosyltransferase family. PyrE subfamily. As to quaternary structure, homodimer. Mg(2+) serves as cofactor.

It carries out the reaction orotidine 5'-phosphate + diphosphate = orotate + 5-phospho-alpha-D-ribose 1-diphosphate. It functions in the pathway pyrimidine metabolism; UMP biosynthesis via de novo pathway; UMP from orotate: step 1/2. In terms of biological role, catalyzes the transfer of a ribosyl phosphate group from 5-phosphoribose 1-diphosphate to orotate, leading to the formation of orotidine monophosphate (OMP). The protein is Orotate phosphoribosyltransferase of Methylorubrum populi (strain ATCC BAA-705 / NCIMB 13946 / BJ001) (Methylobacterium populi).